A 205-amino-acid chain; its full sequence is Large ribosomal subunit protein uL4 (205 aa).

Residues 56–76 (VSGTTAKPYRQKHTGRARQGS) are disordered.

Belongs to the universal ribosomal protein uL4 family. As to quaternary structure, part of the 50S ribosomal subunit.

Functionally, one of the primary rRNA binding proteins, this protein initially binds near the 5'-end of the 23S rRNA. It is important during the early stages of 50S assembly. It makes multiple contacts with different domains of the 23S rRNA in the assembled 50S subunit and ribosome. Forms part of the polypeptide exit tunnel. This chain is Large ribosomal subunit protein uL4, found in Ehrlichia ruminantium (strain Welgevonden).